Consider the following 265-residue polypeptide: Small ribosomal subunit protein uS2 (265 aa).

The protein belongs to the universal ribosomal protein uS2 family.

The chain is Small ribosomal subunit protein uS2 from Aliarcobacter butzleri (strain RM4018) (Arcobacter butzleri).